The sequence spans 385 residues: 3,5,7-trioxododecanoyl-CoA synthase (385 aa).

Cys-157 is a catalytic residue.

This sequence belongs to the thiolase-like superfamily. Chalcone/stilbene synthases family. Expressed in bracts, flowers and young leaves. Not detected in mature leaves, roots and stems. Expressed in glandular trichomes.

The enzyme catalyses hexanoyl-CoA + 3 malonyl-CoA + 3 H(+) = 3,5,7-trioxododecanoyl-CoA + 3 CO2 + 3 CoA. The catalysed reaction is 3,5,7-trioxododecanoyl-CoA = olivetol + CO2 + CoA. The protein operates within secondary metabolite biosynthesis; terpenoid biosynthesis. Functionally, involved in the biosynthesis of cannabinoids-related terpenophenolic natural products, which have pharmacological activity. Polyketide synthase responsible for olivetol biosynthesis, from a C(12)-polyketide, probably 3,5,7-trioxododecanoyl-CoA. Catalyzes the first step in the cannabinoids biosynthetic pathway. The preferred substrate is hexanoyl-CoA, but also accepts CoA esters with C4 to C8 aliphatic side chains. When using malonyl-CoA and hexanoyl-CoA as substrates, produces undetermined compounds distinct form olivetol or olivetolic acid that could be hexanoyl triacetic acid lactone (HTAL) and pentyl diacetic acid lactone (PDAL). Produces olivetolic acid when acting in concert with olivetolic acid cyclase (OAC). The polypeptide is 3,5,7-trioxododecanoyl-CoA synthase (Cannabis sativa (Hemp)).